The sequence spans 469 residues: Aryl-phospho-beta-D-glucosidase BglH (469 aa).

Glu175 functions as the Proton donor in the catalytic mechanism. The Nucleophile role is filled by Glu368.

It belongs to the glycosyl hydrolase 1 family.

It carries out the reaction 6-phospho-beta-D-glucosyl-(1-&gt;4)-D-glucose + H2O = D-glucose 6-phosphate + D-glucose. In terms of biological role, catalyzes the hydrolysis of aryl-phospho-beta-D-glucosides such as 4-methylumbelliferyl-phospho-beta-D-glucopyranoside (MUG-P), phosphoarbutin and phosphosalicin. Plays a major role in the utilization of arbutin or salicin as the sole carbon source. BglA and BglH are the major proteins contributing to hydrolysis of MUG-P by extracts of late-exponential-phase or stationary-phase B.subtilis cells. The sequence is that of Aryl-phospho-beta-D-glucosidase BglH (bglH) from Bacillus subtilis (strain 168).